The following is a 236-amino-acid chain: Small ribosomal subunit protein uS3 (236 aa).

Positions 39–107 (IREFLTEELK…DTSLNIVEVR (69 aa)) constitute a KH type-2 domain. Residues 214–236 (ASERRAVEGDNQGSSSNRRRENA) are disordered.

The protein belongs to the universal ribosomal protein uS3 family. As to quaternary structure, part of the 30S ribosomal subunit. Forms a tight complex with proteins S10 and S14.

In terms of biological role, binds the lower part of the 30S subunit head. Binds mRNA in the 70S ribosome, positioning it for translation. In Brucella abortus (strain S19), this protein is Small ribosomal subunit protein uS3.